The chain runs to 151 residues: Deoxyuridine 5'-triphosphate nucleotidohydrolase (151 aa).

Substrate is bound by residues 70 to 72 (RSG), asparagine 83, 87 to 89 (LID), and methionine 97.

The protein belongs to the dUTPase family. Homotrimer. Requires Mg(2+) as cofactor.

The enzyme catalyses dUTP + H2O = dUMP + diphosphate + H(+). It participates in pyrimidine metabolism; dUMP biosynthesis; dUMP from dCTP (dUTP route): step 2/2. Functionally, this enzyme is involved in nucleotide metabolism: it produces dUMP, the immediate precursor of thymidine nucleotides and it decreases the intracellular concentration of dUTP so that uracil cannot be incorporated into DNA. In Escherichia coli O45:K1 (strain S88 / ExPEC), this protein is Deoxyuridine 5'-triphosphate nucleotidohydrolase.